Here is a 508-residue protein sequence, read N- to C-terminus: Beta-glucosidase 10 (508 aa).

Residues 1 to 22 (MKLYSLLSVFLVILLATSDSDA) form the signal peptide. A beta-D-glucoside contacts are provided by residues glutamine 42, histidine 142, and 187-188 (NE). The active-site Proton donor is glutamate 188. An intrachain disulfide couples cysteine 207 to cysteine 215. 2 N-linked (GlcNAc...) asparagine glycosylation sites follow: asparagine 214 and asparagine 219. Position 331 (tyrosine 331) interacts with a beta-D-glucoside. N-linked (GlcNAc...) asparagine glycosylation occurs at asparagine 365. Glutamate 398 contacts a beta-D-glucoside. Residue glutamate 398 is the Nucleophile of the active site. Residue asparagine 431 is glycosylated (N-linked (GlcNAc...) asparagine). Tryptophan 441 and phenylalanine 457 together coordinate a beta-D-glucoside. Asparagine 463, asparagine 485, and asparagine 501 each carry an N-linked (GlcNAc...) asparagine glycan.

Belongs to the glycosyl hydrolase 1 family.

It carries out the reaction Hydrolysis of terminal, non-reducing beta-D-glucosyl residues with release of beta-D-glucose.. The sequence is that of Beta-glucosidase 10 from Arabidopsis thaliana (Mouse-ear cress).